Here is a 471-residue protein sequence, read N- to C-terminus: Glycosyl hydrolase family 109 protein 1 (471 aa).

Positions 1 to 15 (MIKNLSTFFVGIALS) are cleaved as a signal peptide. Residue cysteine 16 is the site of N-palmitoyl cysteine attachment. Cysteine 16 is lipidated: S-diacylglycerol cysteine. Residues 70 to 71 (MR), aspartate 92, 141 to 144 (WKHH), 161 to 162 (EV), and asparagine 190 each bind NAD(+). Substrate-binding positions include tyrosine 219, arginine 235, 247–250 (YATH), and tyrosine 325. Tyrosine 247 provides a ligand contact to NAD(+).

Belongs to the Gfo/Idh/MocA family. Glycosyl hydrolase 109 subfamily. NAD(+) serves as cofactor.

Its subcellular location is the cell membrane. Functionally, glycosidase. In Phocaeicola vulgatus (strain ATCC 8482 / DSM 1447 / JCM 5826 / CCUG 4940 / NBRC 14291 / NCTC 11154) (Bacteroides vulgatus), this protein is Glycosyl hydrolase family 109 protein 1.